Reading from the N-terminus, the 247-residue chain is 3-deoxy-manno-octulosonate cytidylyltransferase (247 aa).

It belongs to the KdsB family.

The protein resides in the cytoplasm. It carries out the reaction 3-deoxy-alpha-D-manno-oct-2-ulosonate + CTP = CMP-3-deoxy-beta-D-manno-octulosonate + diphosphate. It functions in the pathway nucleotide-sugar biosynthesis; CMP-3-deoxy-D-manno-octulosonate biosynthesis; CMP-3-deoxy-D-manno-octulosonate from 3-deoxy-D-manno-octulosonate and CTP: step 1/1. Its pathway is bacterial outer membrane biogenesis; lipopolysaccharide biosynthesis. Functionally, activates KDO (a required 8-carbon sugar) for incorporation into bacterial lipopolysaccharide in Gram-negative bacteria. In Chlorobium limicola (strain DSM 245 / NBRC 103803 / 6330), this protein is 3-deoxy-manno-octulosonate cytidylyltransferase.